The following is a 68-amino-acid chain: ATP synthase F(0) complex subunit 8 (68 aa).

A helical transmembrane segment spans residues 8–24 (TWSITIVSMIITLFIMF). K54 carries the N6-acetyllysine; alternate modification. The residue at position 54 (K54) is an N6-succinyllysine; alternate. Residue K57 is modified to N6-acetyllysine.

The protein belongs to the ATPase protein 8 family. Component of the ATP synthase complex composed at least of ATP5F1A/subunit alpha, ATP5F1B/subunit beta, ATP5MC1/subunit c (homooctomer), MT-ATP6/subunit a, MT-ATP8/subunit 8, ATP5ME/subunit e, ATP5MF/subunit f, ATP5MG/subunit g, ATP5MK/subunit k, ATP5MJ/subunit j, ATP5F1C/subunit gamma, ATP5F1D/subunit delta, ATP5F1E/subunit epsilon, ATP5PF/subunit F6, ATP5PB/subunit b, ATP5PD/subunit d, ATP5PO/subunit OSCP. ATP synthase complex consists of a soluble F(1) head domain (subunits alpha(3) and beta(3)) - the catalytic core - and a membrane F(0) domain - the membrane proton channel (subunits c, a, 8, e, f, g, k and j). These two domains are linked by a central stalk (subunits gamma, delta, and epsilon) rotating inside the F1 region and a stationary peripheral stalk (subunits F6, b, d, and OSCP). Interacts with PRICKLE3.

The protein localises to the mitochondrion membrane. Functionally, subunit 8, of the mitochondrial membrane ATP synthase complex (F(1)F(0) ATP synthase or Complex V) that produces ATP from ADP in the presence of a proton gradient across the membrane which is generated by electron transport complexes of the respiratory chain. ATP synthase complex consist of a soluble F(1) head domain - the catalytic core - and a membrane F(1) domain - the membrane proton channel. These two domains are linked by a central stalk rotating inside the F(1) region and a stationary peripheral stalk. During catalysis, ATP synthesis in the catalytic domain of F(1) is coupled via a rotary mechanism of the central stalk subunits to proton translocation. In vivo, can only synthesize ATP although its ATP hydrolase activity can be activated artificially in vitro. Part of the complex F(0) domain. The chain is ATP synthase F(0) complex subunit 8 from Ceratotherium simum (White rhinoceros).